Here is a 135-residue protein sequence, read N- to C-terminus: Actin-related protein 2/3 complex subunit 5B (135 aa).

Belongs to the ARPC5 family. In terms of assembly, component of the Arp2/3 complex composed of ARP2, ARP3, ARPC1/p41-ARC, ARPC2/p34-ARC, ARPC3/p21-ARC, ARPC4/p20-ARC and ARPC5/p16-ARC.

It localises to the cytoplasm. The protein resides in the cytoskeleton. It is found in the cell projection. Functionally, functions as a component of the Arp2/3 complex which is involved in regulation of actin polymerization and together with an activating nucleation-promoting factor (NPF) mediates the formation of branched actin networks. Arp2/3 complex plays a critical role in the control of cell morphogenesis via the modulation of cell polarity development. This chain is Actin-related protein 2/3 complex subunit 5B (ARPC5B), found in Arabidopsis thaliana (Mouse-ear cress).